A 635-amino-acid polypeptide reads, in one-letter code: Sodium-dependent multivitamin transporter (635 aa).

Transmembrane regions (helical) follow at residues F24 to L44, C68 to V88, and F101 to F121. N138 carries an N-linked (GlcNAc...) asparagine glycan. The next 9 helical transmembrane spans lie at V143 to A163, L176 to L196, V199 to I219, F256 to A276, V297 to A317, F336 to I356, I396 to I416, I428 to F448, and A456 to V476. 2 N-linked (GlcNAc...) asparagine glycosylation sites follow: N489 and N498. Residues L528–L548 traverse the membrane as a helical segment.

Belongs to the sodium:solute symporter (SSF) (TC 2.A.21) family. Interacts with PDZD11. May be glycosylated. In terms of tissue distribution, expressed in microvessels of the brain (at protein level). Expressed in heart, brain, placenta, lung, liver, skeletal muscle, kidney, and pancreas.

The protein resides in the cell membrane. The protein localises to the apical cell membrane. It catalyses the reaction biotin(out) + 2 Na(+)(out) = biotin(in) + 2 Na(+)(in). The enzyme catalyses (R)-pantothenate(out) + 2 Na(+)(out) = (R)-pantothenate(in) + 2 Na(+)(in). It carries out the reaction (R)-lipoate(out) + 2 Na(+)(out) = (R)-lipoate(in) + 2 Na(+)(in). The catalysed reaction is iodide(out) + 2 Na(+)(out) = iodide(in) + 2 Na(+)(in). In terms of biological role, sodium-dependent multivitamin transporter that mediates the electrogenic transport of pantothenate, biotin, lipoate and iodide. Functions as a Na(+)-coupled substrate symporter where the stoichiometry of Na(+):substrate is 2:1, creating an electrochemical Na(+) gradient used as driving force for substrate uptake. Required for biotin and pantothenate uptake in the intestine across the brush border membrane. Plays a role in the maintenance of intestinal mucosa integrity, by providing the gut mucosa with biotin. Contributes to the luminal uptake of biotin and pantothenate into the brain across the blood-brain barrier. The sequence is that of Sodium-dependent multivitamin transporter from Homo sapiens (Human).